The sequence spans 364 residues: Cobalt-precorrin-5B C(1)-methyltransferase (364 aa).

It belongs to the CbiD family.

The enzyme catalyses Co-precorrin-5B + S-adenosyl-L-methionine = Co-precorrin-6A + S-adenosyl-L-homocysteine. The protein operates within cofactor biosynthesis; adenosylcobalamin biosynthesis; cob(II)yrinate a,c-diamide from sirohydrochlorin (anaerobic route): step 6/10. Functionally, catalyzes the methylation of C-1 in cobalt-precorrin-5B to form cobalt-precorrin-6A. The chain is Cobalt-precorrin-5B C(1)-methyltransferase from Pseudomonas putida (strain W619).